Reading from the N-terminus, the 585-residue chain is L-gulonolactone oxidase 3 (585 aa).

An N-terminal signal peptide occupies residues 1–24 (MRYSHTLQQFSILSFFVTIWTVQS). The FAD-binding PCMH-type domain maps to 51 to 233 (KTCHAANVTY…SKVKLSIEKA (183 aa)).

This sequence belongs to the oxygen-dependent FAD-linked oxidoreductase family. It depends on FAD as a cofactor.

The protein resides in the vacuole. It catalyses the reaction L-gulono-1,4-lactone + O2 = L-ascorbate + H2O2 + H(+). It functions in the pathway cofactor biosynthesis; L-ascorbate biosynthesis. Its function is as follows. Catalyzes the oxidation of L-gulono-1,4-lactone to ascorbic acid. L-gulono-1,4-lactone is oxidized to hydrogen peroxide and L-xylo-hexulonolactone which spontaneously isomerizes to L-ascorbate. This Arabidopsis thaliana (Mouse-ear cress) protein is L-gulonolactone oxidase 3.